A 254-amino-acid chain; its full sequence is MTADVKSAAARILSTDSSRDPSFNNFSFTPFLRKSFGFGLASDVPVCKAYSEGHCPLGPACPDRHPTPSRVTTSTTTASGLAPSTTHGSLVCKHFLKGLCKKGLKCEYLHEYNLRRMPECQSFSRSGYCPNGDDCLYQHVREQARLPPCENYDQGFCELGPLCSKRHVRRRLCKYYLAGFCPEGKACPDAHPRWSENLPKPTMRVEKTEEELERERALIREEQEREKEREREWRSERGRGGGFMRGRYRGRGRG.

5 consecutive C3H1-type zinc fingers follow at residues 41 to 68, 91 to 113, 114 to 142, 143 to 167, and 168 to 194; these read ASDVPVCKAYSEGHCPLGPACPDRHPTP, VCKHFLKGLCKKGLKCEYLHEYN, LRRMPECQSFSRSGYCPNGDDCLYQHVRE, QARLPPCENYDQGFCELGPLCSKRH, and VRRRLCKYYLAGFCPEGKACPDAHPRW. Residues 65–84 form a disordered region; the sequence is HPTPSRVTTSTTTASGLAPS. A compositionally biased stretch (low complexity) spans 68-84; sequence PSRVTTSTTTASGLAPS. Residues 198 to 254 form a disordered region; sequence LPKPTMRVEKTEEELERERALIREEQEREKEREREWRSERGRGGGFMRGRYRGRGRG. Residues 203–239 show a composition bias toward basic and acidic residues; sequence MRVEKTEEELERERALIREEQEREKEREREWRSERGR.

The protein belongs to the CPSF4/YTH1 family.

It is found in the nucleus. In terms of biological role, component of the cleavage factor I (CF I) involved in pre-mRNA 3'-end processing. This Aspergillus fumigatus (strain ATCC MYA-4609 / CBS 101355 / FGSC A1100 / Af293) (Neosartorya fumigata) protein is mRNA 3'-end-processing protein yth1 (yth1).